The chain runs to 1598 residues: Serine/threonine-protein kinase Nek1 (1598 aa).

The Protein kinase domain occupies 106–380 (YEVIRQIGAG…ALQCLGYTIF (275 aa)). ATP is bound by residues 112–120 (IGAGRFGEV) and K135. The active-site Proton acceptor is the D240.

This sequence belongs to the protein kinase superfamily. NEK Ser/Thr protein kinase family. NIMA subfamily.

The protein localises to the cytoplasm. It localises to the cytoskeleton. The protein resides in the microtubule organizing center. Its subcellular location is the centrosome. It is found in the spindle pole. The catalysed reaction is L-seryl-[protein] + ATP = O-phospho-L-seryl-[protein] + ADP + H(+). It catalyses the reaction L-threonyl-[protein] + ATP = O-phospho-L-threonyl-[protein] + ADP + H(+). Phosphorylation status of the T-loop (amino acids 267-293) modulates kinase activity and subcellular localization of the protein. In terms of biological role, probable serine/threonine-protein kinase. Involved in controlling centrosome splitting. Promotes separation of the centrosome outer cores. The protein is Serine/threonine-protein kinase Nek1 of Toxoplasma gondii (strain ATCC 50611 / Me49).